A 696-amino-acid polypeptide reads, in one-letter code: Junctophilin-2 (696 aa).

Residues 1-674 (MSGGRFDFDD…EVEVEEVPNT (674 aa)) are Cytoplasmic-facing. MORN repeat units lie at residues 14–36 (YCGG…KGQG), 38–59 (YSGS…SGNT), 60–79 (FEGY…TKGR), 82–104 (YKGE…NSGA), 106–128 (YEGT…DGGT), and 129–151 (YQGQ…PYGM). Phosphoserine occurs at positions 162 and 165. Disordered regions lie at residues 164-192 (SSLR…SPPV) and 246-273 (LSSG…AAPF). MORN repeat units lie at residues 285–307 (YMGE…SGLR) and 308–330 (YEGE…DGHR). The Bipartite nuclear localization signal motif lies at 345–359 (KRRVLPLKSSKVRQK). Residues 439–664 (NSESLLEPPE…RKEVAQAKEA (226 aa)) form a disordered region. 3 positions are modified to phosphoserine: S440, S442, and S462. Over residues 457-471 (ERPRESPQLHERETP) the composition is skewed to basic and acidic residues. T470 is modified (phosphothreonine). Pro residues predominate over residues 474 to 487 (EGGPPSPAGTPPQP). Phosphoserine is present on S479. A Phosphothreonine modification is found at T483. Positions 488 to 492 (KRPRP) match the Nuclear localization signal motif. Phosphoserine is present on residues S527 and S533. Residues 573–585 (PLEDEQEPEPEPE) show a composition bias toward acidic residues. Phosphoserine is present on residues S593, S597, and S613. The span at 631–644 (AEPKAKARKTEARG) shows a compositional bias: basic and acidic residues. Residues 675–695 (VLICMVILLNIGLAILFVHLL) traverse the membrane as a helical; Anchor for type IV membrane protein segment.

Belongs to the junctophilin family. As to quaternary structure, interacts with TRPC3. Interacts with BAG5 and HSPA8; the interaction with HSPA8 is increased in the presence of BAG5. Interacts with MEF2C. Post-translationally, proteolytically cleaved by calpain in response to cardiac stress. The major cleavage site takes place at the C-terminus and leads to the release of the Junctophilin-2 N-terminal fragment chain (JP2NT). In terms of processing, phosphorylation on Ser-165, probably by PKC, affects RYR1-mediated calcium ion release, interaction with TRPC3, and skeletal muscle myotubule development. In terms of tissue distribution, abundantly expressed in skeletal muscle and heart. Weak expression in stomach and lung.

The protein resides in the cell membrane. The protein localises to the sarcoplasmic reticulum membrane. Its subcellular location is the endoplasmic reticulum membrane. It is found in the nucleus. Its function is as follows. Membrane-binding protein that provides a structural bridge between the plasma membrane and the sarcoplasmic reticulum and is required for normal excitation-contraction coupling in cardiomyocytes. Provides a structural foundation for functional cross-talk between the cell surface and intracellular Ca(2+) release channels by maintaining the 12-15 nm gap between the sarcolemma and the sarcoplasmic reticulum membranes in the cardiac dyads. Necessary for proper intracellular Ca(2+) signaling in cardiac myocytes via its involvement in ryanodine receptor-mediated calcium ion release. Contributes to the construction of skeletal muscle triad junctions. In terms of biological role, transcription repressor required to safeguard against the deleterious effects of cardiac stress. Generated following cleavage of the Junctophilin-2 chain by calpain in response to cardiac stress in cardiomyocytes. Following cleavage and release from the membrane, translocates to the nucleus, binds DNA and represses expression of genes implicated in cell growth and differentiation, hypertrophy, inflammation and fibrosis. Modifies the transcription profile and thereby attenuates pathological remodeling in response to cardiac stress. Probably acts by competing with MEF2 transcription factors and TATA-binding proteins. This is Junctophilin-2 from Mus musculus (Mouse).